The chain runs to 189 residues: UPF0301 protein RF_0044 (189 aa).

It belongs to the UPF0301 (AlgH) family.

In Rickettsia felis (strain ATCC VR-1525 / URRWXCal2) (Rickettsia azadi), this protein is UPF0301 protein RF_0044.